A 204-amino-acid polypeptide reads, in one-letter code: MKVKICGITDMETAKRACEYGADALGFVFAESKRKITPGLAKEIIQELPANVLKIGVFVNESVEVIQKITGNCGLTHVQLHGGEDNHQIRRLNIPSIKSLGVTSESDMKNAQGYETDYILFDSPKEKFHGGNGKTFPWELLAHMPKELREKTILAGGLNTLNIEEAIRTVRPYMVDVSSGVETEGKKDVEKIKQFIIKAKECSK.

The protein belongs to the TrpF family.

The catalysed reaction is N-(5-phospho-beta-D-ribosyl)anthranilate = 1-(2-carboxyphenylamino)-1-deoxy-D-ribulose 5-phosphate. It participates in amino-acid biosynthesis; L-tryptophan biosynthesis; L-tryptophan from chorismate: step 3/5. The sequence is that of N-(5'-phosphoribosyl)anthranilate isomerase from Bacillus anthracis (strain A0248).